The sequence spans 900 residues: E3 ubiquitin-protein ligase BRE1-like 2 (900 aa).

The disordered stretch occupies residues 1–31; that stretch reads MENQESDEPMQKKPHLLDSVSPNSMARNSSP. The span at 20–31 shows a compositional bias: polar residues; sequence VSPNSMARNSSP. Coiled-coil stretches lie at residues 63–96, 217–300, 437–660, and 706–737; these read TVLQ…LQLN, EDAT…KDAA, SRIE…AEME, and SEKQ…EQMK. Residues 848 to 887 form an RING-type zinc finger; sequence CGVCFDRPKEVVIVKCYHLFCQQCIQRSLEIRHRKCPGCG.

The protein belongs to the BRE1 family. May act as a tetramer consisting of two copies of HUB1 and two copies of HUB2. Ubiquitously expressed.

The protein resides in the nucleus. It carries out the reaction S-ubiquitinyl-[E2 ubiquitin-conjugating enzyme]-L-cysteine + [acceptor protein]-L-lysine = [E2 ubiquitin-conjugating enzyme]-L-cysteine + N(6)-ubiquitinyl-[acceptor protein]-L-lysine.. It functions in the pathway protein modification; protein ubiquitination. Its function is as follows. E3 ubiquitin-protein ligase that monoubiquitinates H2B to form H2BK143ub1. H2BK143ub1 gives a specific tag for epigenetic transcriptional activation and is also prerequisite for H3K4me and maybe H3K79me. It thereby plays a central role in histone code and gene regulation. Forms a ubiquitin ligase complex in cooperation with the E2 enzyme UBC2/RAD6. The sequence is that of E3 ubiquitin-protein ligase BRE1-like 2 (HUB2) from Arabidopsis thaliana (Mouse-ear cress).